The primary structure comprises 268 residues: Small ribosomal subunit protein eS1 (268 aa).

The disordered stretch occupies residues 1-21; sequence MAVGKNKGLSKGGKKGGKKKV.

Belongs to the eukaryotic ribosomal protein eS1 family. Component of the small ribosomal subunit. Mature ribosomes consist of a small (40S) and a large (60S) subunit. The 40S subunit contains about 33 different proteins and 1 molecule of RNA (18S). The 60S subunit contains about 49 different proteins and 3 molecules of RNA (28S, 5.8S and 5S).

The protein localises to the cytoplasm. Essential for oogenesis; required for late follicle cell development. The sequence is that of Small ribosomal subunit protein eS1 from Drosophila sechellia (Fruit fly).